The following is a 486-amino-acid chain: N-succinylglutamate 5-semialdehyde dehydrogenase (486 aa).

Residue 220–225 (GSSRTG) participates in NAD(+) binding. Residues E243 and C277 contribute to the active site.

This sequence belongs to the aldehyde dehydrogenase family. AstD subfamily.

The catalysed reaction is N-succinyl-L-glutamate 5-semialdehyde + NAD(+) + H2O = N-succinyl-L-glutamate + NADH + 2 H(+). The protein operates within amino-acid degradation; L-arginine degradation via AST pathway; L-glutamate and succinate from L-arginine: step 4/5. Catalyzes the NAD-dependent reduction of succinylglutamate semialdehyde into succinylglutamate. The polypeptide is N-succinylglutamate 5-semialdehyde dehydrogenase (Shewanella baltica (strain OS185)).